The following is a 107-amino-acid chain: Nucleoid-associated protein GDI3467/Gdia_2910 (107 aa).

It belongs to the YbaB/EbfC family. As to quaternary structure, homodimer.

Its subcellular location is the cytoplasm. The protein localises to the nucleoid. Its function is as follows. Binds to DNA and alters its conformation. May be involved in regulation of gene expression, nucleoid organization and DNA protection. This Gluconacetobacter diazotrophicus (strain ATCC 49037 / DSM 5601 / CCUG 37298 / CIP 103539 / LMG 7603 / PAl5) protein is Nucleoid-associated protein GDI3467/Gdia_2910.